Reading from the N-terminus, the 580-residue chain is Protein O-linked-mannose beta-1,4-N-acetylglucosaminyltransferase 2 (580 aa).

Residues 1-4 are Cytoplasmic-facing; it reads MHLS. A helical; Signal-anchor for type II membrane protein transmembrane segment spans residues 5-25; it reads AVLNALLVSVLAAVLWKHVRL. The Lumenal segment spans residues 26–580; the sequence is REHAASLEEE…PFADVLVCST (555 aa). N-linked (GlcNAc...) asparagine glycans are attached at residues asparagine 99 and asparagine 276. One can recognise a Fibronectin type-III domain in the interval 488-580; sequence ARCQASVQGA…PFADVLVCST (93 aa).

Belongs to the glycosyltransferase 61 family.

The protein localises to the endoplasmic reticulum membrane. It carries out the reaction 3-O-(alpha-D-mannosyl)-L-threonyl-[protein] + UDP-N-acetyl-alpha-D-glucosamine = 3-O-(N-acetyl-beta-D-glucosaminyl-(1-&gt;4)-alpha-D-mannosyl)-L-threonyl-[protein] + UDP + H(+). It participates in protein modification; protein glycosylation. In terms of biological role, O-linked mannose beta-1,4-N-acetylglucosaminyltransferase that transfers UDP-N-acetyl-D-glucosamine to the 4-position of the mannose to generate N-acetyl-D-glucosamine-beta-1,4-O-D-mannosylprotein. Involved in the biosynthesis of the phosphorylated O-mannosyl trisaccharide (N-acetylgalactosamine-beta-3-N-acetylglucosamine-beta-4-(phosphate-6-)mannose), a carbohydrate structure present in alpha-dystroglycan (DAG1), which is required for binding laminin G-like domain-containing extracellular proteins with high affinity. This is Protein O-linked-mannose beta-1,4-N-acetylglucosaminyltransferase 2 (POMGNT2) from Bos taurus (Bovine).